The chain runs to 1550 residues: Cellulose synthase 1 (1550 aa).

The catalytic stretch occupies residues 1–741; sequence MPEVRSSTQS…KERVLKGTVK (741 aa). 3 consecutive transmembrane segments (helical) span residues 26-46, 47-67, and 106-126; these read GAGLIIGVFGLCALIAATSVT, LPPEQQLIVAFVCVVIFFIVG, and GLLGTMLLVAELYALMMLFLS. The tract at residues 147–240 is catalytic subdomain A; that stretch reads EWPTVDIFVP…YILIFDCDHV (94 aa). The active site involves aspartate 189. Aspartate 236 and aspartate 238 together coordinate substrate. Residues 317 to 377 are catalytic subdomain B; the sequence is TAIEQIGGFA…GQRVRWARGM (61 aa). Aspartate 333 is an active-site residue. 5 helical membrane passes run 398-418, 423-443, 468-488, 507-527, and 547-567; these read LCYLSAMTSFLFAVPRVIFLS, FLFFGQNIIAASPLALLAYAI, VYETTMALFLVRVTIVTLLSP, FDLGAVYPNIILGLIMFGGLA, and LLNSAWAMLSLIIILAAIAVG. Residues 572–647 form the PilZ domain; the sequence is QKRNSHRIPA…PARIIRAGNG (76 aa). Disordered stretches follow at residues 708–731 and 768–813; these read VHRSSPTKPSAGNALSDDTNNPSR and APAH…QPLA. The cyclic di-GMP binding domain stretch occupies residues 742-1550; the sequence is MVSLLALLTF…KQLEDERRKS (809 aa). Positions 768-796 are enriched in low complexity; that stretch reads APAHQPEASDLPPLPALLPATSGAAQAGS. A helical membrane pass occupies residues 1513-1533; the sequence is VLLVGLLGCILIVSVLARALA.

This sequence in the N-terminal section; belongs to the glycosyltransferase 2 family. It in the C-terminal section; belongs to the AcsB/BcsB family. Requires Mg(2+) as cofactor.

The protein resides in the cell inner membrane. It carries out the reaction [(1-&gt;4)-beta-D-glucosyl](n) + UDP-alpha-D-glucose = [(1-&gt;4)-beta-D-glucosyl](n+1) + UDP + H(+). The protein operates within glycan metabolism; bacterial cellulose biosynthesis. In terms of biological role, bifunctional protein comprised of a catalytic subunit and a regulatory subunit. The catalytic subunit of cellulose synthase polymerizes uridine 5'-diphosphate glucose to cellulose in a processive way. The thick cellulosic mats generated by this enzyme probably provide a specialized protective environment to the bacterium. The regulatory subunit binds bis-(3'-5') cyclic diguanylic acid (c-di-GMP). This is Cellulose synthase 1 (acsAB) from Novacetimonas hansenii (Komagataeibacter hansenii).